The sequence spans 427 residues: Serine--tRNA ligase (427 aa).

Position 231–233 (231–233 (TAE)) interacts with L-serine. 262–264 (RSE) provides a ligand contact to ATP. E285 lines the L-serine pocket. Residue 349–352 (EISS) participates in ATP binding. S385 contributes to the L-serine binding site.

Belongs to the class-II aminoacyl-tRNA synthetase family. Type-1 seryl-tRNA synthetase subfamily. As to quaternary structure, homodimer. The tRNA molecule binds across the dimer.

The protein resides in the cytoplasm. The enzyme catalyses tRNA(Ser) + L-serine + ATP = L-seryl-tRNA(Ser) + AMP + diphosphate + H(+). The catalysed reaction is tRNA(Sec) + L-serine + ATP = L-seryl-tRNA(Sec) + AMP + diphosphate + H(+). It participates in aminoacyl-tRNA biosynthesis; selenocysteinyl-tRNA(Sec) biosynthesis; L-seryl-tRNA(Sec) from L-serine and tRNA(Sec): step 1/1. Its function is as follows. Catalyzes the attachment of serine to tRNA(Ser). Is also able to aminoacylate tRNA(Sec) with serine, to form the misacylated tRNA L-seryl-tRNA(Sec), which will be further converted into selenocysteinyl-tRNA(Sec). This chain is Serine--tRNA ligase, found in Exiguobacterium sp. (strain ATCC BAA-1283 / AT1b).